Here is a 354-residue protein sequence, read N- to C-terminus: Protein angel (354 aa).

Positions 22-59 (VSSQAKGASGKRKQKAKEMESSHDRNRRWTSLGNQAEG) are disordered.

The protein belongs to the CCR4/nocturin family. As to expression, ubiquitously expressed in embryos.

This chain is Protein angel (angel), found in Drosophila melanogaster (Fruit fly).